Here is a 330-residue protein sequence, read N- to C-terminus: Intraflagellar transport protein 46 homolog (330 aa).

2 disordered regions span residues 1–21 (MDRPYDETVDIPDSEDIATPR) and 55–112 (SIKT…EGVY). Residues 7–16 (ETVDIPDSED) are compositionally biased toward acidic residues. Basic and acidic residues predominate over residues 68–79 (SSSEKLCDRGSS). The segment covering 80–101 (DDDDDDDNDDDEDEDDDDDDEN) has biased composition (acidic residues).

This sequence belongs to the IFT46 family.

Its subcellular location is the cytoplasm. It is found in the cytoskeleton. The protein localises to the cilium basal body. It localises to the cell projection. The protein resides in the cilium. In terms of biological role, forms part of a complex involved in intraflagellar transport (IFT), the bi-directional movement of particles required for the assembly, maintenance and functioning of primary cilia. The sequence is that of Intraflagellar transport protein 46 homolog from Schistosoma japonicum (Blood fluke).